Here is a 249-residue protein sequence, read N- to C-terminus: Aquaporin TIP2-1 (249 aa).

Transmembrane regions (helical) follow at residues 20–40 (AYVA…GSAI) and 54–74 (AGLV…VSVA). The short motif at 83–85 (NPA) is the NPA 1 element. The next 3 helical transmembrane spans lie at 102–122 (VFYW…LGFV), 141–161 (GVVF…ATAA), and 168–188 (LGTI…LAAG). Residues 196 to 198 (NPA) carry the NPA 2 motif. The chain crosses the membrane as a helical span at residues 217-237 (WVGPLVGGGLAGLVYGDVFIG).

It belongs to the MIP/aquaporin (TC 1.A.8) family. TIP (TC 1.A.8.10) subfamily.

It localises to the vacuole membrane. Its function is as follows. Aquaporins facilitate the transport of water and small neutral solutes across cell membranes. This chain is Aquaporin TIP2-1 (TIP2-1), found in Zea mays (Maize).